A 102-amino-acid chain; its full sequence is Large ribosomal subunit protein bL21 (102 aa).

This sequence belongs to the bacterial ribosomal protein bL21 family. Part of the 50S ribosomal subunit. Contacts protein L20.

Its function is as follows. This protein binds to 23S rRNA in the presence of protein L20. In Macrococcus caseolyticus (strain JCSC5402) (Macrococcoides caseolyticum), this protein is Large ribosomal subunit protein bL21.